The primary structure comprises 239 residues: Flagellar L-ring protein (239 aa).

The signal sequence occupies residues 1 to 16 (MKPVILATASALLLAA). A lipid anchor (N-palmitoyl cysteine) is attached at Cys-17. Cys-17 is lipidated: S-diacylglycerol cysteine. The segment covering 120-138 (SGSTSGSASGNLGLTGDTS) has biased composition (polar residues). Residues 120–145 (SGSTSGSASGNLGLTGDTSTDGKGKI) form a disordered region.

Belongs to the FlgH family. The basal body constitutes a major portion of the flagellar organelle and consists of four rings (L,P,S, and M) mounted on a central rod.

It is found in the cell outer membrane. Its subcellular location is the bacterial flagellum basal body. Assembles around the rod to form the L-ring and probably protects the motor/basal body from shearing forces during rotation. This Azorhizobium caulinodans (strain ATCC 43989 / DSM 5975 / JCM 20966 / LMG 6465 / NBRC 14845 / NCIMB 13405 / ORS 571) protein is Flagellar L-ring protein.